Consider the following 478-residue polypeptide: Trigger factor (478 aa).

The 82-residue stretch at 162–243 (GDFVSIDLSA…VKSIKERELP (82 aa)) folds into the PPIase FKBP-type domain. Positions 424–478 (KDTDGNDIDTTEFFGPSGGAQAEAEGADEADADSDADSDTEADSDTEADEADEAK) are disordered. A compositionally biased stretch (acidic residues) spans 448–478 (EGADEADADSDADSDTEADSDTEADEADEAK).

This sequence belongs to the FKBP-type PPIase family. Tig subfamily.

The protein localises to the cytoplasm. It carries out the reaction [protein]-peptidylproline (omega=180) = [protein]-peptidylproline (omega=0). Its function is as follows. Involved in protein export. Acts as a chaperone by maintaining the newly synthesized protein in an open conformation. Functions as a peptidyl-prolyl cis-trans isomerase. The polypeptide is Trigger factor (Mycobacterium sp. (strain KMS)).